A 179-amino-acid polypeptide reads, in one-letter code: Inner membrane-spanning protein YciB (179 aa).

Transmembrane regions (helical) follow at residues 3 to 23 (FLYD…FGIY), 49 to 69 (NALI…LWLQ), 76 to 96 (WKPT…QWLF), 119 to 139 (LNLA…YVAY), and 149 to 169 (FKLF…TLLL).

The protein belongs to the YciB family.

Its subcellular location is the cell inner membrane. Functionally, plays a role in cell envelope biogenesis, maintenance of cell envelope integrity and membrane homeostasis. This is Inner membrane-spanning protein YciB from Methylobacillus flagellatus (strain ATCC 51484 / DSM 6875 / VKM B-1610 / KT).